The chain runs to 894 residues: Alanine--tRNA ligase (894 aa).

Histidine 569, histidine 573, cysteine 683, and histidine 687 together coordinate Zn(2+).

It belongs to the class-II aminoacyl-tRNA synthetase family. It depends on Zn(2+) as a cofactor.

Its subcellular location is the cytoplasm. It carries out the reaction tRNA(Ala) + L-alanine + ATP = L-alanyl-tRNA(Ala) + AMP + diphosphate. Functionally, catalyzes the attachment of alanine to tRNA(Ala) in a two-step reaction: alanine is first activated by ATP to form Ala-AMP and then transferred to the acceptor end of tRNA(Ala). Also edits incorrectly charged Ser-tRNA(Ala) and Gly-tRNA(Ala) via its editing domain. The polypeptide is Alanine--tRNA ligase (Chloroflexus aurantiacus (strain ATCC 29366 / DSM 635 / J-10-fl)).